Here is a 421-residue protein sequence, read N- to C-terminus: Leucine-rich repeat-containing protein 42 (421 aa).

LRR repeat units lie at residues 149–170 (VLCSLCLRNRYLVVAEKLEEIK), 174–195 (ELTRLDLSCCWLGDEHELLEHL), 202–222 (SVTQLHLKDNCLSDAGIRKMT), 234–255 (NLTLLDLSCNPEITDAGIGYLF), and 259–280 (KLNCLDISGTGLKDIKAVKDKL). Residues 374–406 (HEPLLSQESKKSKKRAFEESEQEQSSPQSAKQK) form a disordered region. Residue serine 399 is modified to Phosphoserine.

The protein belongs to the LRRC42 family.

The chain is Leucine-rich repeat-containing protein 42 (Lrrc42) from Rattus norvegicus (Rat).